The following is a 56-amino-acid chain: Small ribosomal subunit protein uS14 (56 aa).

Zn(2+) is bound by residues C21, C24, C39, and C42.

It belongs to the universal ribosomal protein uS14 family. Zinc-binding uS14 subfamily. As to quaternary structure, part of the 30S ribosomal subunit. Zn(2+) is required as a cofactor.

Binds 16S rRNA, required for the assembly of 30S particles. The chain is Small ribosomal subunit protein uS14 from Thermococcus kodakarensis (strain ATCC BAA-918 / JCM 12380 / KOD1) (Pyrococcus kodakaraensis (strain KOD1)).